The sequence spans 298 residues: ATP phosphoribosyltransferase (298 aa).

Belongs to the ATP phosphoribosyltransferase family. Long subfamily. Mg(2+) is required as a cofactor.

The protein localises to the cytoplasm. It carries out the reaction 1-(5-phospho-beta-D-ribosyl)-ATP + diphosphate = 5-phospho-alpha-D-ribose 1-diphosphate + ATP. It functions in the pathway amino-acid biosynthesis; L-histidine biosynthesis; L-histidine from 5-phospho-alpha-D-ribose 1-diphosphate: step 1/9. Feedback inhibited by histidine. In terms of biological role, catalyzes the condensation of ATP and 5-phosphoribose 1-diphosphate to form N'-(5'-phosphoribosyl)-ATP (PR-ATP). Has a crucial role in the pathway because the rate of histidine biosynthesis seems to be controlled primarily by regulation of HisG enzymatic activity. The polypeptide is ATP phosphoribosyltransferase (Aliivibrio fischeri (strain ATCC 700601 / ES114) (Vibrio fischeri)).